Here is a 274-residue protein sequence, read N- to C-terminus: Thiamine kinase (274 aa).

This sequence belongs to the thiamine kinase family.

The enzyme catalyses thiamine + ATP = thiamine phosphate + ADP + H(+). It functions in the pathway cofactor biosynthesis; thiamine diphosphate biosynthesis; thiamine phosphate from thiamine: step 1/1. Functionally, catalyzes the ATP-dependent phosphorylation of thiamine to thiamine phosphate. Is involved in thiamine salvage. This Salmonella newport (strain SL254) protein is Thiamine kinase.